A 513-amino-acid chain; its full sequence is Arabinoxylan arabinofuranohydrolase (513 aa).

The signal sequence occupies residues 1–26 (MRKKCSVCLWILVLLLSCLSGKSAYA). Catalysis depends on Asp50, which acts as the Proton acceptor. Residue Glu251 is the Proton donor of the active site. A substrate-binding site is contributed by Asn314. The region spanning 382–511 (NRVEAETFAW…LFNFDYWQFT (130 aa)) is the CBM6 domain. Residues Glu385, Glu387, Asn409, Gln410, and Asp506 each coordinate Ca(2+).

The protein localises to the secreted. It catalyses the reaction Hydrolysis of terminal non-reducing alpha-L-arabinofuranoside residues in alpha-L-arabinosides.. The protein operates within glycan degradation; xylan degradation. In terms of biological role, cleaves arabinose units from O-2- or O-3-monosubstituted xylose residues, thereby assisting in arabinoxylan (AX) and short-chain arabinoxylo-oligosaccharide (AXOS) degradation. Is more active on wheat bran AXOS than on wheat water-extractable AX and rye water-extractable AX. Does not display endoxylanase, xylosidase or arabinanase activity. The chain is Arabinoxylan arabinofuranohydrolase (xynD) from Bacillus subtilis (strain 168).